The primary structure comprises 260 residues: Nuclear receptor subfamily 0 group B member 2 (260 aa).

The NR LBD domain occupies 16-260 (SHPTILYTLL…ELLEDMLLLR (245 aa)). Arg-57 carries the post-translational modification Symmetric dimethylarginine; by PRMT5.

Belongs to the nuclear hormone receptor family. NR0 subfamily. Heterodimer; efficient DNA binding requires dimerization with another bHLH protein. Interacts (via N-terminus) with NEUROD1 (via N-terminus and C-terminus). Interacts with ID2. Interacts with NR1I3 and EID1. Interacts with RARA, RXRA, THRB, NR5A1, NR5A2, PPARA and PPARG. Interacts with RORG, NFIL3, NR1D1 and BHLHE41. Interacts with HNF4A; the resulting heterodimer is transcriptionally inactive. Interacts with DDX3X; this interaction disrupts the interaction between HNF4 and NR0B2/SHP that forms inactive heterodimers and enhances the formation of active HNF4 homodimers. Arginine methylation by PRMT5 enhances repression activity of metabolic genes in liver in response to bile acid signaling, by increasing interaction with cofactors. In terms of tissue distribution, detected in kidney, testis, heart and liver.

Its subcellular location is the cytoplasm. The protein resides in the nucleus. Its function is as follows. Transcriptional regulator that acts as a negative regulator of receptor-dependent signaling pathways. Specifically inhibits transactivation of the nuclear receptor with which it interacts. Inhibits transcriptional activity of NEUROD1 on E-box-containing promoter by interfering with the coactivation function of the p300/CBP-mediated transcription complex for NEUROD1. Essential component of the liver circadian clock which via its interaction with NR1D1 and RORG regulates NPAS2-mediated hepatic lipid metabolism. Regulates the circadian expression of cytochrome P450 (CYP) enzymes. Represses: NR5A2 and HNF4A to down-regulate CYP2C38, NFLI3 to up-regulate CYP2A5, BHLHE41/HNF1A axis to up-regulate CYP1A2, CYP2E1 and CYP3A11, and NR1D1 to up-regulate CYP2B10, CYP4A10 and CYP4A14. This Rattus norvegicus (Rat) protein is Nuclear receptor subfamily 0 group B member 2 (Nr0b2).